The chain runs to 420 residues: Glutamate-1-semialdehyde 2,1-aminomutase (420 aa).

N6-(pyridoxal phosphate)lysine is present on lysine 261.

The protein belongs to the class-III pyridoxal-phosphate-dependent aminotransferase family. HemL subfamily. It depends on pyridoxal 5'-phosphate as a cofactor.

The protein localises to the cytoplasm. It carries out the reaction (S)-4-amino-5-oxopentanoate = 5-aminolevulinate. Its pathway is porphyrin-containing compound metabolism; protoporphyrin-IX biosynthesis; 5-aminolevulinate from L-glutamyl-tRNA(Glu): step 2/2. The protein is Glutamate-1-semialdehyde 2,1-aminomutase of Thermoplasma volcanium (strain ATCC 51530 / DSM 4299 / JCM 9571 / NBRC 15438 / GSS1).